A 414-amino-acid chain; its full sequence is MANVQQGQKDKIVLAYSGGLDTSIILKWLQTERNYDVVTFTADLGQGDEVEEARVKALNTGAVAAYALDLREEFVRDYVFPMFRAAALYEGYYLLGTSIARPLIAKKLVEIAEKEGAVAVSHGATGKGNDQVRFEMTAYALKPDIVTVAPWRDWDFQGRADLETFAREHGIPVPTTKKDPWSTDANLLHISYEGGILEDPWAEPPAHMFKLTVSPEEAPDQPEYVEVEFENGDPVAIGGERLSPAALLAKANEIGGRNGVGRIDLVENRFVGMKSRGVYETPGGTLLYHARRAVESLTLDREVLHQRDALAPKYAELVYNGFWFAPEREALQVYIDHVARSVTGTARLKLYKGNCTVVGRRAPRSLYDKDLVSFEAGGDYNQHDAGAFIKLNALRMRVQARVDAKRTQQEVARV.

ATP-binding positions include 15–23 (AYSGGLDTS) and Ala-42. 2 residues coordinate L-citrulline: Tyr-93 and Ser-98. Gly-123 provides a ligand contact to ATP. L-aspartate-binding residues include Thr-125, Asn-129, and Asp-130. Asn-129 contacts L-citrulline. Residues Arg-133, Ser-182, Ser-191, Glu-267, and Tyr-279 each contribute to the L-citrulline site.

Belongs to the argininosuccinate synthase family. Type 1 subfamily. Homotetramer.

It is found in the cytoplasm. It catalyses the reaction L-citrulline + L-aspartate + ATP = 2-(N(omega)-L-arginino)succinate + AMP + diphosphate + H(+). It participates in amino-acid biosynthesis; L-arginine biosynthesis; L-arginine from L-ornithine and carbamoyl phosphate: step 2/3. This chain is Argininosuccinate synthase, found in Deinococcus geothermalis (strain DSM 11300 / CIP 105573 / AG-3a).